The chain runs to 116 residues: U16-barytoxin-Tl1b (116 aa).

The N-terminal stretch at 1–20 (MKTIIVFLSLLVLATKFGDA) is a signal peptide. Residues 21-74 (KEGVNQKQKKEVTQNEFREEYLNEMAAMSLVQQLEAIERALFENEAGRNSRQKR) constitute a propeptide that is removed on maturation. 3 disulfide bridges follow: C75-C90, C82-C95, and C89-C110.

This sequence belongs to the neurotoxin 14 (magi-1) family. 06 (ICK-Trit) subfamily. Expressed by the venom gland.

It localises to the secreted. Functionally, ion channel inhibitor. The sequence is that of U16-barytoxin-Tl1b from Trittame loki (Brush-footed trapdoor spider).